The chain runs to 275 residues: Lectin (275 aa).

Positions 1–30 are cleaved as a signal peptide; that stretch reads MASLQTQMISFYLIFLSILLTTIFFFKVNS. Residues Asp-111 and Gly-129 each contribute to the D-glucose site. The Mn(2+) site is built by Glu-149 and Asp-151. Ca(2+) contacts are provided by Asp-151, Phe-153, Asn-155, and Asp-159. Residues Asp-159 and His-166 each contribute to the Mn(2+) site. A propeptide spanning residues 211–217 is cleaved from the precursor; the sequence is NSLEEEN. D-glucose-binding residues include Gly-246 and Ala-247. Residues 270 to 275 constitute a propeptide that is removed on maturation; the sequence is KQAADA.

It belongs to the leguminous lectin family. Heterotetramer of two alpha and two beta chains. The mature form consists of two chains, alpha and beta, produced by cleavage of the immature protein. These remain cleaved, yet fold together to form one subunit.

In terms of biological role, D-mannose specific lectin. This Lens culinaris (Lentil) protein is Lectin.